Reading from the N-terminus, the 305-residue chain is T-cell immunoglobulin and mucin domain-containing protein 2 (305 aa).

Positions 1–21 are cleaved as a signal peptide; sequence MNQIQVFISGLILLLPGAVES. The Ig-like V-type domain occupies 22 to 125; the sequence is HTAVQGLAGH…AFHFVDYMLE (104 aa). At 22–231 the chain is on the extracellular side; it reads HTAVQGLAGH…QKPQKNLNKG (210 aa). Disulfide bonds link C37–C109, C50–C61, and C56–C108. N86 and N91 each carry an N-linked (GlcNAc...) asparagine glycan. Residues 130–174 form a disordered region; the sequence is ISTSPPTRPTATGRPTTISTRSTHVPTSTRVSTSTSPTPAHTETY. The segment covering 131-167 has biased composition (low complexity); it reads STSPPTRPTATGRPTTISTRSTHVPTSTRVSTSTSPT. A helical membrane pass occupies residues 232–252; that stretch reads FYVGISIAALLILMLLSTMVI. Residues 253–305 lie on the Cytoplasmic side of the membrane; that stretch reads TRYVVMKRKSESLSFVAFPISKIGASPKKVVERTRCEDQVYIIEDTPYPEEES.

Belongs to the immunoglobulin superfamily. TIM family. In terms of assembly, homodimer. In terms of tissue distribution, expressed on late differentiated Th2 cells. Expressed also on all splenic B-cells, with increased levels on germinal center B-cells, in the liver, especially in bile duct epithelial cells, and in renal tubule cells. Within retina, mainly expressed in Mueller cells.

Its subcellular location is the cell membrane. Functionally, cell surface glycoprotein that participates in iron homeostasis in the liver, the kidney, the retina and oligodendrocytes by acting as a receptor of H-ferritin. Mechanistically, mediates iron-containing ferritin uptake via an endocytic pathway, trafficking to endosomes and subsequently to lysosomes. Plays also an important role in the regulation of Th2 immunity. Receptor for SEMA4A involved in the regulation of T-cell function, enhancing T-cell activation. The protein is T-cell immunoglobulin and mucin domain-containing protein 2 (Timd2) of Mus musculus (Mouse).